Here is a 95-residue protein sequence, read N- to C-terminus: Co-chaperonin GroES (95 aa).

It belongs to the GroES chaperonin family. In terms of assembly, heptamer of 7 subunits arranged in a ring. Interacts with the chaperonin GroEL.

Its subcellular location is the cytoplasm. Functionally, together with the chaperonin GroEL, plays an essential role in assisting protein folding. The GroEL-GroES system forms a nano-cage that allows encapsulation of the non-native substrate proteins and provides a physical environment optimized to promote and accelerate protein folding. GroES binds to the apical surface of the GroEL ring, thereby capping the opening of the GroEL channel. This Chlorobium limicola (strain DSM 245 / NBRC 103803 / 6330) protein is Co-chaperonin GroES.